Reading from the N-terminus, the 541-residue chain is Zingiberene synthase (541 aa).

Mg(2+) is bound by residues D295, D299, N439, S443, and E447. Residues 295–299 carry the DDXXD motif motif; that stretch reads DDIID.

This sequence belongs to the terpene synthase family. It depends on Mg(2+) as a cofactor. The cofactor is Mn(2+).

The protein resides in the cytoplasm. The enzyme catalyses (2E,6E)-farnesyl diphosphate = alpha-zingiberene + diphosphate. It functions in the pathway secondary metabolite biosynthesis; terpenoid biosynthesis. Its function is as follows. Sesquiterpene synthase converting farnesyl diphosphate into two major products, zingiberene &gt; beta-sesquiphellandrene, and five minor products, 7-epi-sesquithujene, sesquisabinene A, (E)-alpha-bergamotene, (E)-beta-farnesene and beta-bisabolene. Can also accept geranyl diphosphate as substrate, producing nine monoterpenes, with myrcene, limonene and alpha-terpinolene as the major products. The protein is Zingiberene synthase (TPS1) of Sorghum bicolor (Sorghum).